The primary structure comprises 381 residues: Alkanesulfonate monooxygenase (381 aa).

Belongs to the SsuD family. Homotetramer.

It carries out the reaction an alkanesulfonate + FMNH2 + O2 = an aldehyde + FMN + sulfite + H2O + 2 H(+). Its function is as follows. Catalyzes the desulfonation of aliphatic sulfonates. In Escherichia coli O81 (strain ED1a), this protein is Alkanesulfonate monooxygenase.